The following is a 980-amino-acid chain: Valine--tRNA ligase (980 aa).

The short motif at 43–53 is the 'HIGH' region element; it reads PNVTGTLHMGH. Positions 586 to 590 match the 'KMSKS' region motif; that stretch reads KMSKS. Residue Lys589 participates in ATP binding. The stretch at 914–978 forms a coiled coil; that stretch reads LVDMDAERTR…QLTGLREQRA (65 aa).

Belongs to the class-I aminoacyl-tRNA synthetase family. ValS type 1 subfamily. As to quaternary structure, monomer.

The protein localises to the cytoplasm. The enzyme catalyses tRNA(Val) + L-valine + ATP = L-valyl-tRNA(Val) + AMP + diphosphate. Functionally, catalyzes the attachment of valine to tRNA(Val). As ValRS can inadvertently accommodate and process structurally similar amino acids such as threonine, to avoid such errors, it has a 'posttransfer' editing activity that hydrolyzes mischarged Thr-tRNA(Val) in a tRNA-dependent manner. This chain is Valine--tRNA ligase, found in Xanthomonas euvesicatoria pv. vesicatoria (strain 85-10) (Xanthomonas campestris pv. vesicatoria).